The primary structure comprises 364 residues: Solute carrier family 35 member C2 (364 aa).

Helical transmembrane passes span Ala14–Tyr34 and Phe42–Leu62. Asn102 carries an N-linked (GlcNAc...) asparagine glycan. The next 7 membrane-spanning stretches (helical) occupy residues Ser104–Ile124, Leu136–Tyr156, Phe166–Leu186, Phe202–Leu222, Leu238–Phe258, Leu272–Gly292, and Ile295–Ala315. Residues Ser335 and Ser336 each carry the phosphoserine modification.

The protein belongs to the TPT transporter family. SLC35C subfamily.

It localises to the golgi apparatus. The protein localises to the cis-Golgi network membrane. The protein resides in the endoplasmic reticulum-Golgi intermediate compartment membrane. Functionally, may play an important role in the cellular response to tissue hypoxia. May be either a GDP-fucose transporter that competes with SLC35C1 for GDP-fucose, or a factor that otherwise enhances the fucosylation of Notch and is required for optimal Notch signaling in mammalian cells. This Mus musculus (Mouse) protein is Solute carrier family 35 member C2 (Slc35c2).